The sequence spans 291 residues: Shikimate dehydrogenase (NADP(+)) (291 aa).

Shikimate-binding positions include 14-16 (SKS) and threonine 61. The active-site Proton acceptor is lysine 65. Residue glutamate 77 coordinates NADP(+). Shikimate-binding residues include asparagine 86 and aspartate 102. Residues 139 to 143 (GAGGA), 164 to 169 (NRTFSR), and leucine 232 contribute to the NADP(+) site. Residue tyrosine 234 coordinates shikimate. Glycine 256 contacts NADP(+).

Belongs to the shikimate dehydrogenase family. Homodimer.

It carries out the reaction shikimate + NADP(+) = 3-dehydroshikimate + NADPH + H(+). Its pathway is metabolic intermediate biosynthesis; chorismate biosynthesis; chorismate from D-erythrose 4-phosphate and phosphoenolpyruvate: step 4/7. Its function is as follows. Involved in the biosynthesis of the chorismate, which leads to the biosynthesis of aromatic amino acids. Catalyzes the reversible NADPH linked reduction of 3-dehydroshikimate (DHSA) to yield shikimate (SA). This chain is Shikimate dehydrogenase (NADP(+)), found in Blochmanniella pennsylvanica (strain BPEN).